Reading from the N-terminus, the 179-residue chain is Stathmin-2 (179 aa).

Residues 1-26 are membrane attachment; it reads MAKTAMAYKEKMKELSMLSLICSCFY. S16 carries the post-translational modification Phosphoserine. 2 S-palmitoyl cysteine lipidation sites follow: C22 and C24. Positions 38–179 constitute an SLD domain; it reads DDMEVKQINK…NKELQVELSG (142 aa). The regulatory/phosphorylation domain stretch occupies residues 39-96; the sequence is DMEVKQINKRASGQAFELILKPPSPISEAPRTLASPKKKDLSLEEIQKKLEAAEERRK. A phosphoserine mark is found at S50, S62, S73, and S97. Positions 75 to 179 form a coiled coil; sequence KKKDLSLEEI…NKELQVELSG (105 aa).

The protein belongs to the stathmin family. As to quaternary structure, interacts with MAPK8. Interacts with ITM2C. Interacts with KIFBP. Interacts (via the N-terminal region) with CIB1 (via C-terminal region); the interaction is direct, occurs in a calcium-dependent manner and attenuates the neurite outgrowth inhibition of STMN2. In terms of processing, sumoylated. Post-translationally, phosphorylated mostly by MAPK8, but also by MAPK9 and MAPK10 in the developing brain cortex. N-terminal palmitoylation promotes specific anchoring to the cytosolic leaflet of Golgi membranes and subsequent vesicular trafficking along dendrites and axons. Neuronal Stathmins are substrates for palmitoyltransferases ZDHHC3, ZDHHC7 and ZDHHC15. In terms of tissue distribution, neuron specific.

The protein resides in the cytoplasm. Its subcellular location is the perinuclear region. It localises to the cell projection. The protein localises to the growth cone. It is found in the membrane. The protein resides in the axon. Its subcellular location is the golgi apparatus. It localises to the endosome. The protein localises to the lamellipodium. In terms of biological role, regulator of microtubule stability. When phosphorylated by MAPK8, stabilizes microtubules and consequently controls neurite length in cortical neurons. In the developing brain, negatively regulates the rate of exit from multipolar stage and retards radial migration from the ventricular zone. The sequence is that of Stathmin-2 (STMN2) from Homo sapiens (Human).